The chain runs to 91 residues: DNA-directed RNA polymerase subunit omega (91 aa).

This sequence belongs to the RNA polymerase subunit omega family. In terms of assembly, the RNAP catalytic core consists of 2 alpha, 1 beta, 1 beta' and 1 omega subunit. When a sigma factor is associated with the core the holoenzyme is formed, which can initiate transcription.

It carries out the reaction RNA(n) + a ribonucleoside 5'-triphosphate = RNA(n+1) + diphosphate. Promotes RNA polymerase assembly. Latches the N- and C-terminal regions of the beta' subunit thereby facilitating its interaction with the beta and alpha subunits. In Photorhabdus laumondii subsp. laumondii (strain DSM 15139 / CIP 105565 / TT01) (Photorhabdus luminescens subsp. laumondii), this protein is DNA-directed RNA polymerase subunit omega.